Consider the following 208-residue polypeptide: MSTGGDFGNPLRKFKLVFLGEQSVGKTSLITRFMYDSFDNTYQATIGIDFLSKTMYLEDRTVRLQLWDTAGQERFRSLIPSYIRDSTVAVVVYDITNVNSFQQTTKWIDDVRTERGSDVIIMLVGNKTDLADKRQVSIEEGERKAKELNVMFIETSAKAGYNVKQLFRRVAAALPGMESTQDRSREDMIDIKLEKPQEQPVSEGGCSC.

An N-acetylserine modification is found at Ser2. GTP is bound by residues Ser23, Val24, Gly25, Lys26, Thr27, Ser28, Asp39, Asn40, Tyr42, and Thr45. Mg(2+) is bound at residue Thr27. The Switch 1 motif lies at 32 to 50; that stretch reads RFMYDSFDNTYQATIGIDF. Residues Thr45 and Asp68 each contribute to the Mg(2+) site. The Switch 2 motif lies at 69–88; that stretch reads TAGQERFRSLIPSYIRDSTV. Gly71 is a GTP binding site. Tyr82 bears the O-AMP-tyrosine; by Legionella DrrA mark. Asn126, Lys127, Asp129, Ser156, Ala157, and Lys158 together coordinate GTP. Ser184 is modified (phosphoserine). S-geranylgeranyl cysteine attachment occurs at residues Cys206 and Cys208. Cys208 bears the Cysteine methyl ester mark.

This sequence belongs to the small GTPase superfamily. Rab family. As to quaternary structure, interacts (GTP-bound) with DYNLRB1; the interaction is direct. Interacts with BICD1. Interacts with BICD2; the interaction is direct. Interacts (GTP-bound) with VPS13B. Interacts with BICD1. Interacts (GDP-bound) with DYNLRB1; the interaction is direct. Interacts (GTP-bound) with VPS13B. In terms of assembly, interacts with BICDL1; leads to its accumulation in the pericentrosomal region. Interacts with SCYL1BP1. Interacts with VSP52. Interacts with RABGAP1. Interacts with GCC2 (via its GRIP domain). Interacts with RAB6IP1 (via its RUN 1 domain). Interacts with TMF1. Interacts with CIMAP3. Interacts (GTP-bound) with APBA1/MINT1 isoform 2, also called Mint1_826, but not with isoform 1. Interacts with RIC1; the interaction is direct with a preference for RAB6A-GDP. Interacts with RGP1; the interaction is direct with a preference for RAB6A-GDP. As to quaternary structure, (Microbial infection) Interacts with human cytomegalovirus protein UL32. Requires Mg(2+) as cofactor. Post-translationally, prenylated. As to expression, ubiquitous.

The protein localises to the golgi apparatus membrane. It localises to the cytoplasmic vesicle. It is found in the secretory vesicle. The protein resides in the acrosome membrane. The enzyme catalyses GTP + H2O = GDP + phosphate + H(+). Regulated by guanine nucleotide exchange factors (GEFs) which promote the exchange of bound GDP for free GTP. Regulated by GTPase activating proteins (GAPs) which increase the GTP hydrolysis activity. Inhibited by GDP dissociation inhibitors (GDIs). Its function is as follows. The small GTPases Rab are key regulators of intracellular membrane trafficking, from the formation of transport vesicles to their fusion with membranes. Rabs cycle between an inactive GDP-bound form and an active GTP-bound form that is able to recruit to membranes different sets of downstream effectors directly responsible for vesicle formation, movement, tethering and fusion. RAB6A acts as a regulator of COPI-independent retrograde transport from the Golgi apparatus towards the endoplasmic reticulum (ER). Has a low GTPase activity. Recruits VPS13B to the Golgi membrane. Plays a role in neuron projection development. The polypeptide is Ras-related protein Rab-6A (Homo sapiens (Human)).